Consider the following 511-residue polypeptide: Probable dolichyl pyrophosphate Glc1Man9GlcNAc2 alpha-1,3-glucosyltransferase (511 aa).

11 helical membrane passes run 4–24 (LFWH…PAYH), 94–112 (VYFQ…VLGV), 124–144 (DTQQ…LIFV), 151–171 (YNGL…RQRF), 210–230 (VVSA…PFAV), 300–320 (PAIT…PILV), 332–352 (LVFL…GWHV), 356–370 (AILM…LTLV), 377–394 (YAYV…PLLF), 432–452 (WLYM…SFLL), and 469–491 (YSAL…ISWG).

The protein belongs to the ALG6/ALG8 glucosyltransferase family.

It is found in the endoplasmic reticulum membrane. The catalysed reaction is an alpha-D-Glc-(1-&gt;3)-alpha-D-Man-(1-&gt;2)-alpha-D-Man-(1-&gt;2)-alpha-D-Man-(1-&gt;3)-[alpha-D-Man-(1-&gt;2)-alpha-D-Man-(1-&gt;3)-[alpha-D-Man-(1-&gt;2)-alpha-D-Man-(1-&gt;6)]-alpha-D-Man-(1-&gt;6)]-beta-D-Man-(1-&gt;4)-beta-D-GlcNAc-(1-&gt;4)-alpha-D-GlcNAc-diphospho-di-trans,poly-cis-dolichol + a di-trans,poly-cis-dolichyl beta-D-glucosyl phosphate = an alpha-D-Glc-(1-&gt;3)-alpha-D-Glc-(1-&gt;3)-alpha-D-Man-(1-&gt;2)-alpha-D-Man-(1-&gt;2)-alpha-D-Man-(1-&gt;3)-[alpha-D-Man-(1-&gt;2)-alpha-D-Man-(1-&gt;3)-[alpha-D-Man-(1-&gt;2)-alpha-D-Man-(1-&gt;6)]-alpha-D-Man-(1-&gt;6)]-beta-D-Man-(1-&gt;4)-beta-D-GlcNAc-(1-&gt;4)-alpha-D-GlcNAc-diphospho-di-trans,poly-cis-dolichol + a di-trans,poly-cis-dolichyl phosphate + H(+). Its pathway is protein modification; protein glycosylation. In terms of biological role, adds the second glucose residue to the lipid-linked oligosaccharide precursor for N-linked glycosylation. Transfers glucose from dolichyl phosphate glucose (Dol-P-Glc) onto the lipid-linked oligosaccharide Glc(1)Man(9)GlcNAc(2)-PP-Dol. Functions in developmental processes such as germband extension, the apical constriction of mesoderm precursor cells and ventral furrow formation in early embryogenesis prior to gastrulation. Involved in the glycosylation and intracellular distribution of shg (E-cadherin). Function in cell intercalation in the lateral epidermis during germband extension may be due to its effect on shg. The sequence is that of Probable dolichyl pyrophosphate Glc1Man9GlcNAc2 alpha-1,3-glucosyltransferase from Drosophila melanogaster (Fruit fly).